The following is a 501-amino-acid chain: Splicing factor 3A subunit 3 (501 aa).

An N-acetylmethionine modification is found at Met1. Residues Ser54 and Ser121 each carry the phosphoserine modification. Positions 175–179 match the Nuclear localization signal motif; that stretch reads KERKN. A phosphoserine mark is found at Ser295 and Ser299. The segment covering 343 to 354 has biased composition (basic and acidic residues); the sequence is ENVQRKQARTGE. The segment at 343–374 is disordered; sequence ENVQRKQARTGEEREEEEEEQISESESEDEEN. Residues 355-374 are compositionally biased toward acidic residues; the sequence is EREEEEEEQISESESEDEEN. Phosphoserine occurs at positions 365, 367, and 369. The Matrin-type zinc finger occupies 406–437; that stretch reads YNCEICGNYTYRGPKAFQRHFAEWRHAHGMRC. At Thr475 the chain carries Phosphothreonine.

This sequence belongs to the SF3A3 family. As to quaternary structure, component of the 17S U2 SnRNP complex, a ribonucleoprotein complex that contains small nuclear RNA (snRNA) U2 and a number of specific proteins. Part of the SF3A subcomplex of the 17S U2 SnRNP complex which is composed of three subunits; SF3A3/SAP61, SF3A2/SAP62 and SF3A1/SAP114. SF3A associates with the splicing factor SF3B and a 12S RNA unit to form the mature 17S U2 small nuclear ribonucleoprotein complex (17S U2 snRNP). Identified in the spliceosome 'E' complex, a precursor of the spliceosome 'A' complex. Identified in the spliceosome 'A' and 'B' complexes. Identified in the spliceosome 'C' complex. In terms of tissue distribution, ubiquitous.

It localises to the nucleus speckle. It is found in the nucleus. Its function is as follows. Component of the 17S U2 SnRNP complex of the spliceosome, a large ribonucleoprotein complex that removes introns from transcribed pre-mRNAs. The 17S U2 SnRNP complex (1) directly participates in early spliceosome assembly and (2) mediates recognition of the intron branch site during pre-mRNA splicing by promoting the selection of the pre-mRNA branch-site adenosine, the nucleophile for the first step of splicing. Within the 17S U2 SnRNP complex, SF3A3 is part of the SF3A subcomplex that contributes to the assembly of the 17S U2 snRNP, and the subsequent assembly of the pre-spliceosome 'E' complex and the pre-catalytic spliceosome 'A' complex. Involved in pre-mRNA splicing as a component of pre-catalytic spliceosome 'B' complexes. In Homo sapiens (Human), this protein is Splicing factor 3A subunit 3 (SF3A3).